A 204-amino-acid chain; its full sequence is MEAEPERAEAPRRGGVAAVLKMGRRARQDIFAGENLSRKNSPSASLGEVPPPKPPRRQGGWADDPVLAPTKSGRKHAEEVEDHRLRQQSLEASDDGGDIPVIPDLEDVQDEDLAMQVAAPPSVQVNRVLTYHDLDKDLMKYAAFQTLDGEVDLKLLTKVLAPEHELREDDVSWDWDHLFTEVSSELVTEWDLGQSEREDHISLP.

2 stretches are compositionally biased toward basic and acidic residues: residues 1–12 and 75–85; these read MEAEPERAEAPR and KHAEEVEDHRL. The interval 1-103 is disordered; the sequence is MEAEPERAEA…DDGGDIPVIP (103 aa).

It belongs to the IFT43 family. Component of the IFT complex A (IFT-A) complex.

It localises to the cytoplasm. The protein localises to the cytoskeleton. The protein resides in the cell projection. Its subcellular location is the cilium. Its function is as follows. As a component of IFT complex A (IFT-A), a complex required for retrograde ciliary transport and entry into cilia of G protein-coupled receptors (GPCRs), it is involved in ciliogenesis. Involved in retrograde ciliary transport along microtubules from the ciliary tip to the base. The sequence is that of Intraflagellar transport protein 43 homolog (IFT43) from Taeniopygia guttata (Zebra finch).